The following is a 1407-amino-acid chain: DNA-directed RNA polymerase subunit beta' (1407 aa).

The Zn(2+) site is built by Cys70, Cys72, Cys85, and Cys88. Positions 460, 462, and 464 each coordinate Mg(2+). Residues Cys814, Cys888, Cys895, and Cys898 each contribute to the Zn(2+) site.

It belongs to the RNA polymerase beta' chain family. In terms of assembly, the RNAP catalytic core consists of 2 alpha, 1 beta, 1 beta' and 1 omega subunit. When a sigma factor is associated with the core the holoenzyme is formed, which can initiate transcription. The cofactor is Mg(2+). Zn(2+) is required as a cofactor.

The enzyme catalyses RNA(n) + a ribonucleoside 5'-triphosphate = RNA(n+1) + diphosphate. Functionally, DNA-dependent RNA polymerase catalyzes the transcription of DNA into RNA using the four ribonucleoside triphosphates as substrates. The sequence is that of DNA-directed RNA polymerase subunit beta' from Erwinia tasmaniensis (strain DSM 17950 / CFBP 7177 / CIP 109463 / NCPPB 4357 / Et1/99).